The chain runs to 328 residues: Ankyrin repeat domain-containing protein 2 (328 aa).

Phosphoserine is present on Ser-36. At Ser-68 the chain carries Phosphoserine; by PKB/AKT2. The interval 96-116 is disordered; the sequence is RDALAAAQEPPPEPEEITGPV. ANK repeat units lie at residues 116–145, 149–178, 182–211, 215–244, and 248–277; these read VNEETFLKAAVEGKMKVIDKYLADGGSADT, FRRTALHRASLEGHMEILEKLLENGATVDF, LDCTAMHWACRGGHLEVVRLLQSRGADTNV, LLSTPLHVAVRTGHVEIVEHFLSLGLDINA, and EGDSALHDAVRLNRYKIIKLLLLHGADMMA. The tract at residues 297–328 is disordered; it reads RHALEHPEPESEQNGLERPGSGRETPQPIPAQ.

In terms of assembly, interacts with ID3; both proteins cooperate in myoblast differentiation. Interacts with TTN/titin. Interacts (via ANK repeats) with TCAP; the interaction is direct. Interacts with TJP1 (via PDZ domains). Interacts with PML; the interaction is direct. Interacts with p53/TP53. Interacts with YBX1. Interacts with AKT2. Post-translationally, phosphorylation at Ser-68 by PKB/AKT2 in response to oxidative stress induces translocation to the nucleus and negatively regulates myoblast differentiation. In terms of tissue distribution, expressed by myoblasts (at protein level). Expressed in skeletal and cardiac muscles.

It localises to the cytoplasm. It is found in the myofibril. Its subcellular location is the sarcomere. The protein resides in the i band. The protein localises to the cytosol. It localises to the nucleus. It is found in the PML body. Its function is as follows. Functions as a negative regulator of myocyte differentiation. May interact with both sarcoplasmic structural proteins and nuclear proteins to regulate gene expression during muscle development and in response to muscle stress. The sequence is that of Ankyrin repeat domain-containing protein 2 (Ankrd2) from Mus musculus (Mouse).